A 481-amino-acid chain; its full sequence is Small ribosomal subunit protein bS1 (481 aa).

4 consecutive S1 motif domains span residues Gly36 to Lys105, Asp123 to Arg188, Gly209 to Lys277, and Gly294 to Lys363. Residues Ala437–Ala465 form a disordered region. Residues Ser445–Ala457 show a composition bias toward polar residues.

Belongs to the bacterial ribosomal protein bS1 family.

Binds mRNA; thus facilitating recognition of the initiation point. It is needed to translate mRNA with a short Shine-Dalgarno (SD) purine-rich sequence. The polypeptide is Small ribosomal subunit protein bS1 (rpsA) (Mycobacterium leprae (strain TN)).